A 460-amino-acid polypeptide reads, in one-letter code: Multidrug resistance protein NorM (460 aa).

12 helical membrane passes run V18–G38, V53–A73, L94–A114, T126–L146, A159–Y179, P185–L205, L242–V262, A276–I296, Y315–F335, V349–V369, F391–I411, and M415–L435.

This sequence belongs to the multi antimicrobial extrusion (MATE) (TC 2.A.66.1) family.

The protein localises to the cell inner membrane. Functionally, multidrug efflux pump that functions as a Na(+)/drug antiporter. The polypeptide is Multidrug resistance protein NorM (norM) (Aliivibrio fischeri (strain ATCC 700601 / ES114) (Vibrio fischeri)).